Consider the following 203-residue polypeptide: Putative 3-methyladenine DNA glycosylase (203 aa).

The protein belongs to the DNA glycosylase MPG family.

The chain is Putative 3-methyladenine DNA glycosylase from Desulfitobacterium hafniense (strain Y51).